The following is a 174-amino-acid chain: Crossover junction endodeoxyribonuclease RuvC (174 aa).

Catalysis depends on residues Asp8, Glu67, and Asp139. Residues Asp8, Glu67, and Asp139 each coordinate Mg(2+).

It belongs to the RuvC family. As to quaternary structure, homodimer which binds Holliday junction (HJ) DNA. The HJ becomes 2-fold symmetrical on binding to RuvC with unstacked arms; it has a different conformation from HJ DNA in complex with RuvA. In the full resolvosome a probable DNA-RuvA(4)-RuvB(12)-RuvC(2) complex forms which resolves the HJ. Mg(2+) serves as cofactor.

It is found in the cytoplasm. It carries out the reaction Endonucleolytic cleavage at a junction such as a reciprocal single-stranded crossover between two homologous DNA duplexes (Holliday junction).. In terms of biological role, the RuvA-RuvB-RuvC complex processes Holliday junction (HJ) DNA during genetic recombination and DNA repair. Endonuclease that resolves HJ intermediates. Cleaves cruciform DNA by making single-stranded nicks across the HJ at symmetrical positions within the homologous arms, yielding a 5'-phosphate and a 3'-hydroxyl group; requires a central core of homology in the junction. The consensus cleavage sequence is 5'-(A/T)TT(C/G)-3'. Cleavage occurs on the 3'-side of the TT dinucleotide at the point of strand exchange. HJ branch migration catalyzed by RuvA-RuvB allows RuvC to scan DNA until it finds its consensus sequence, where it cleaves and resolves the cruciform DNA. This chain is Crossover junction endodeoxyribonuclease RuvC, found in Pseudomonas syringae pv. syringae (strain B728a).